The primary structure comprises 272 residues: Octanoyltransferase (272 aa).

Positions 1 to 12 (MQQDPPTSQPHT) are enriched in polar residues. The interval 1–20 (MQQDPPTSQPHTPQIVDGVK) is disordered. In terms of domain architecture, BPL/LPL catalytic spans 65 to 255 (HQRPNTVIYV…EMMSFQPYEM (191 aa)). Residues 103–110 (RGGEITWH), 175–177 (AIG), and 188–190 (GFA) each bind substrate. Cys206 functions as the Acyl-thioester intermediate in the catalytic mechanism.

The protein belongs to the LipB family.

The protein localises to the cytoplasm. The enzyme catalyses octanoyl-[ACP] + L-lysyl-[protein] = N(6)-octanoyl-L-lysyl-[protein] + holo-[ACP] + H(+). It participates in protein modification; protein lipoylation via endogenous pathway; protein N(6)-(lipoyl)lysine from octanoyl-[acyl-carrier-protein]: step 1/2. Catalyzes the transfer of endogenously produced octanoic acid from octanoyl-acyl-carrier-protein onto the lipoyl domains of lipoate-dependent enzymes. Lipoyl-ACP can also act as a substrate although octanoyl-ACP is likely to be the physiological substrate. The polypeptide is Octanoyltransferase (Cutibacterium acnes (strain DSM 16379 / KPA171202) (Propionibacterium acnes)).